A 317-amino-acid polypeptide reads, in one-letter code: Cytochrome f (317 aa).

The N-terminal stretch at Met-1–Ala-34 is a signal peptide. Tyr-35, Cys-55, Cys-58, and His-59 together coordinate heme. Residues Val-284 to Lys-304 form a helical membrane-spanning segment.

The protein belongs to the cytochrome f family. In terms of assembly, the 4 large subunits of the cytochrome b6-f complex are cytochrome b6, subunit IV (17 kDa polypeptide, PetD), cytochrome f and the Rieske protein, while the 4 small subunits are PetG, PetL, PetM and PetN. The complex functions as a dimer. It depends on heme as a cofactor.

It localises to the cellular thylakoid membrane. Component of the cytochrome b6-f complex, which mediates electron transfer between photosystem II (PSII) and photosystem I (PSI), cyclic electron flow around PSI, and state transitions. The sequence is that of Cytochrome f from Prochlorococcus marinus (strain MIT 9301).